The primary structure comprises 426 residues: CAAX prenyl protease 1 homolog (426 aa).

The Lumenal portion of the chain corresponds to 1-3; it reads MVN. A helical membrane pass occupies residues 4–24; it reads YFIISISFFLLEHFYSFYLNF. Over 25–70 the chain is Cytoplasmic; the sequence is RQSKLLKNLTKVPEYCKDRITQEDFKKSQEYSKAKLDYKTLTSTIQ. A helical membrane pass occupies residues 71-91; sequence VLTTLLSFYYPVYPYFWNLSL. Residues 92–106 are Lumenal-facing; it reads ELAEKIGYPNEIIRS. A helical transmembrane segment spans residues 107-127; sequence CFFFAFTVGVSVITEIPFSYY. Over 128–150 the chain is Cytoplasmic; the sequence is YQFILEEKFGYNRMTRTLFIKDK. A helical transmembrane segment spans residues 151 to 171; sequence IISTLLMIGFGLPILSLAIFI. Residues 172 to 178 are Lumenal-facing; the sequence is INWSGPQ. Residues 179–199 form a helical membrane-spanning segment; it reads LWFYCWLLLVAITLLSITIYP. Residues 200–294 lie on the Cytoplasmic side of the membrane; that stretch reads TFIQPLFNKF…GHYKMSHTLK (95 aa). His282 lines the Zn(2+) pocket. Glu283 is an active-site residue. A Zn(2+)-binding site is contributed by His286. The helical transmembrane segment at 295–315 threads the bilayer; sequence QMLLVQVHLVTLLYAFSLLIN. Residues 316-333 lie on the Lumenal side of the membrane; the sequence is DDQLYQQFGFVSSKDSVL. Residues 334–354 traverse the membrane as a helical segment; it reads VGLTLFMFLYSPIDRIFSLLI. The Cytoplasmic portion of the chain corresponds to 355–426; it reads NIFSRKYEFQ…KVALYKLKNK (72 aa). A Zn(2+)-binding site is contributed by Glu362.

The protein belongs to the peptidase M48B family. It depends on Zn(2+) as a cofactor.

It is found in the endoplasmic reticulum membrane. The catalysed reaction is Hydrolyzes the peptide bond -P2-(S-farnesyl or geranylgeranyl)C-P1'-P2'-P3'-COOH where P1' and P2' are amino acids with aliphatic side chains and P3' is any C-terminal residue.. Functionally, proteolytically removes the C-terminal three residues of farnesylated proteins. The polypeptide is CAAX prenyl protease 1 homolog (zmpste24) (Dictyostelium discoideum (Social amoeba)).